We begin with the raw amino-acid sequence, 276 residues long: Large ribosomal subunit protein uL2 (276 aa).

A disordered region spans residues 223 to 276; sequence GVAMNPVDHPHGGGEGRGKGHHPTSPWGLPTKGYKTRRGKRPSDKFIVRRRNEV. 2 stretches are compositionally biased toward basic and acidic residues: residues 230 to 240 and 263 to 276; these read DHPHGGGEGRG and RPSD…RNEV.

The protein belongs to the universal ribosomal protein uL2 family. Part of the 50S ribosomal subunit. Forms a bridge to the 30S subunit in the 70S ribosome.

In terms of biological role, one of the primary rRNA binding proteins. Required for association of the 30S and 50S subunits to form the 70S ribosome, for tRNA binding and peptide bond formation. It has been suggested to have peptidyltransferase activity; this is somewhat controversial. Makes several contacts with the 16S rRNA in the 70S ribosome. This is Large ribosomal subunit protein uL2 from Thermotoga maritima (strain ATCC 43589 / DSM 3109 / JCM 10099 / NBRC 100826 / MSB8).